The chain runs to 118 residues: V-type proton ATPase subunit G 1 (118 aa).

A2 carries the post-translational modification N-acetylalanine. The disordered stretch occupies residues 55 to 90 (FQSKQQAAMGSQGNLSAEVEQATRRQVQGMQSSQQR). 2 stretches are compositionally biased toward polar residues: residues 56–69 (QSKQ…QGNL) and 78–89 (RRQVQGMQSSQQ).

This sequence belongs to the V-ATPase G subunit family. V-ATPase is a heteromultimeric enzyme made up of two complexes: the ATP-hydrolytic V1 complex and the proton translocation V0 complex. The V1 complex consists of three catalytic AB heterodimers that form a heterohexamer, three peripheral stalks each consisting of EG heterodimers, one central rotor including subunits D and F, and the regulatory subunits C and H. The proton translocation complex V0 consists of the proton transport subunit a, a ring of proteolipid subunits c9c'', rotary subunit d, subunits e and f, and the accessory subunits ATP6AP1/Ac45 and ATP6AP2/PRR.

It localises to the apical cell membrane. In terms of biological role, subunit of the V1 complex of vacuolar(H+)-ATPase (V-ATPase), a multisubunit enzyme composed of a peripheral complex (V1) that hydrolyzes ATP and a membrane integral complex (V0) that translocates protons. V-ATPase is responsible for acidifying and maintaining the pH of intracellular compartments and in some cell types, is targeted to the plasma membrane, where it is responsible for acidifying the extracellular environment. In aerobic conditions, involved in intracellular iron homeostasis, thus triggering the activity of Fe(2+) prolyl hydroxylase (PHD) enzymes, and leading to HIF1A hydroxylation and subsequent proteasomal degradation. The sequence is that of V-type proton ATPase subunit G 1 (ATP6V1G1) from Canis lupus familiaris (Dog).